The following is a 250-amino-acid chain: Probable transcriptional regulatory protein SYNPCC7002_A1640 (250 aa).

It belongs to the TACO1 family.

It localises to the cytoplasm. In Picosynechococcus sp. (strain ATCC 27264 / PCC 7002 / PR-6) (Agmenellum quadruplicatum), this protein is Probable transcriptional regulatory protein SYNPCC7002_A1640.